Consider the following 512-residue polypeptide: Histidine ammonia-lyase (512 aa).

Positions 142-144 form a cross-link, 5-imidazolinone (Ala-Gly); it reads ASG. S143 carries the post-translational modification 2,3-didehydroalanine (Ser).

The protein belongs to the PAL/histidase family. Post-translationally, contains an active site 4-methylidene-imidazol-5-one (MIO), which is formed autocatalytically by cyclization and dehydration of residues Ala-Ser-Gly.

It localises to the cytoplasm. It catalyses the reaction L-histidine = trans-urocanate + NH4(+). It participates in amino-acid degradation; L-histidine degradation into L-glutamate; N-formimidoyl-L-glutamate from L-histidine: step 1/3. This is Histidine ammonia-lyase from Bartonella tribocorum (strain CIP 105476 / IBS 506).